Reading from the N-terminus, the 420-residue chain is MDRIVVKGSGPLSGQIPIAGAKNTCLKLMCAALLSDEPLTLTNVPRLSDVATLSELLESLGVQIGRLDDGQTLAFSANTLTSQLAHYDIVRKLRASFNVLGPLLGRTGQAVVSLPGGCAIGARAVDFHITGLEAMGAKIELKDGYVHAAGDLKGAEIEFPFPSVGATENVMCAAVRAKGTTVIKNAAREPDTKALADCLIAMGADIEGAGTETMIVRGVDRLHGATHRVIADRIEMGTYMCAPGIAGGEVECLGGTRALVASLCDKMEAAGLEITETDAGLKVRHPGGRLKAVDVATAPFPGFPTDLQAQFMAMMCFADGTSVLEETIFENRFMHAPELIRMGASIDVQGNTARVTGVDRLRGAPVMATDLRASVSLILAGLAADGETTVNRVYHLDRGYEHLVRKLRGVGANVERLSDG.

Phosphoenolpyruvate is bound at residue 22–23; that stretch reads KN. Arg-94 contacts UDP-N-acetyl-alpha-D-glucosamine. The active-site Proton donor is Cys-118. Cys-118 carries the 2-(S-cysteinyl)pyruvic acid O-phosphothioketal modification. UDP-N-acetyl-alpha-D-glucosamine is bound by residues Asp-306 and Ile-328.

The protein belongs to the EPSP synthase family. MurA subfamily.

The protein resides in the cytoplasm. The enzyme catalyses phosphoenolpyruvate + UDP-N-acetyl-alpha-D-glucosamine = UDP-N-acetyl-3-O-(1-carboxyvinyl)-alpha-D-glucosamine + phosphate. Its pathway is cell wall biogenesis; peptidoglycan biosynthesis. Functionally, cell wall formation. Adds enolpyruvyl to UDP-N-acetylglucosamine. This is UDP-N-acetylglucosamine 1-carboxyvinyltransferase from Jannaschia sp. (strain CCS1).